The following is a 433-amino-acid chain: Signal recognition particle 54 kDa protein (433 aa).

Residues 106 to 113 (GVEGSGKT), 186 to 190 (DTAGR), and 244 to 247 (TKMD) contribute to the GTP site.

It belongs to the GTP-binding SRP family. SRP54 subfamily. Part of the signal recognition particle protein translocation system, which is composed of SRP and FtsY. Archaeal SRP consists of a 7S RNA molecule of 300 nucleotides and two protein subunits: SRP54 and SRP19.

The protein resides in the cytoplasm. It carries out the reaction GTP + H2O = GDP + phosphate + H(+). Functionally, involved in targeting and insertion of nascent membrane proteins into the cytoplasmic membrane. Binds to the hydrophobic signal sequence of the ribosome-nascent chain (RNC) as it emerges from the ribosomes. The SRP-RNC complex is then targeted to the cytoplasmic membrane where it interacts with the SRP receptor FtsY. The chain is Signal recognition particle 54 kDa protein from Pyrobaculum neutrophilum (strain DSM 2338 / JCM 9278 / NBRC 100436 / V24Sta) (Thermoproteus neutrophilus).